The sequence spans 107 residues: Lipid-anchored protein YDL012C (107 aa).

Polar residues predominate over residues 1 to 18 (MSAQDYYGNSASKQSYSR). Positions 1-86 (MSAQDYYGNS…VQQQPASSGN (86 aa)) are disordered. At serine 2 the chain carries N-acetylserine. Lysine 13 is covalently cross-linked (Glycyl lysine isopeptide (Lys-Gly) (interchain with G-Cter in ubiquitin)). Positions 35–81 (PSQSQQNYYPPQQQQQQYQQQPQYYQQQQPQYYQQHPQQPIYVQQQP) are enriched in low complexity.

Belongs to the CYSTM1 family.

It localises to the cell membrane. The sequence is that of Lipid-anchored protein YDL012C from Saccharomyces cerevisiae (strain ATCC 204508 / S288c) (Baker's yeast).